We begin with the raw amino-acid sequence, 257 residues long: 5'-nucleotidase SurE (257 aa).

A divalent metal cation contacts are provided by D9, D10, S42, and N96.

This sequence belongs to the SurE nucleotidase family. The cofactor is a divalent metal cation.

The protein localises to the cytoplasm. The enzyme catalyses a ribonucleoside 5'-phosphate + H2O = a ribonucleoside + phosphate. In terms of biological role, nucleotidase that shows phosphatase activity on nucleoside 5'-monophosphates. This chain is 5'-nucleotidase SurE, found in Campylobacter lari (strain RM2100 / D67 / ATCC BAA-1060).